The sequence spans 468 residues: Protein C-ets-2 (468 aa).

The 86-residue stretch at 85–170 folds into the PNT domain; that stretch reads ATFSGFQKEQ…EHLEQMIKEN (86 aa). Residues serine 220 and serine 225 each carry the phosphoserine modification. The interval 262-290 is disordered; the sequence is VNLLNNNSGKPKDHDSPENGGDSFESSDS. Phosphoserine is present on residues serine 294, serine 297, and serine 300. The segment at residues 362–442 is a DNA-binding region (ETS); the sequence is IQLWQFLLEL…SGKRYVYRFV (81 aa).

Belongs to the ETS family. Post-translationally, phosphorylation by CDK10 at Ser-220 and Ser-225 creates a phosphodegron that targets ETS2 for proteasomal degradation.

It localises to the nucleus. Functionally, transcription factor activating transcription. Binds specifically the GGA DNA motif in gene promoters and stimulates transcription of those genes. In Mus musculus (Mouse), this protein is Protein C-ets-2 (Ets2).